The chain runs to 540 residues: Glucose-6-phosphate isomerase (540 aa).

The Proton donor role is filled by E350. Residues H381 and K503 contribute to the active site.

Belongs to the GPI family.

It localises to the cytoplasm. It catalyses the reaction alpha-D-glucose 6-phosphate = beta-D-fructose 6-phosphate. It functions in the pathway carbohydrate biosynthesis; gluconeogenesis. It participates in carbohydrate degradation; glycolysis; D-glyceraldehyde 3-phosphate and glycerone phosphate from D-glucose: step 2/4. Catalyzes the reversible isomerization of glucose-6-phosphate to fructose-6-phosphate. This chain is Glucose-6-phosphate isomerase, found in Burkholderia mallei (strain NCTC 10247).